The following is a 403-amino-acid chain: Probable protein phosphatase 2C 8 (403 aa).

The disordered stretch occupies residues 42–80 (LGRTASAVAEDDAAKRVRPASDSSSDSSESAKVAPEPTA). The span at 62 to 71 (SDSSSDSSES) shows a compositional bias: low complexity. The region spanning 90 to 388 (SHGAVSVIGR…DNISVVVVEL (299 aa)) is the PPM-type phosphatase domain. Mn(2+) contacts are provided by D144, G145, D325, and D379.

Belongs to the PP2C family. It depends on Mg(2+) as a cofactor. The cofactor is Mn(2+).

It carries out the reaction O-phospho-L-seryl-[protein] + H2O = L-seryl-[protein] + phosphate. The catalysed reaction is O-phospho-L-threonyl-[protein] + H2O = L-threonyl-[protein] + phosphate. The chain is Probable protein phosphatase 2C 8 from Oryza sativa subsp. japonica (Rice).